Consider the following 450-residue polypeptide: D-inositol 3-phosphate glycosyltransferase (450 aa).

A 1D-myo-inositol 3-phosphate-binding site is contributed by histidine 26. UDP-N-acetyl-alpha-D-glucosamine-binding positions include 32–33 and glycine 40; that span reads QP. 1D-myo-inositol 3-phosphate-binding positions include 37–42, lysine 95, tyrosine 128, threonine 152, and arginine 172; that span reads DAGGMN. UDP-N-acetyl-alpha-D-glucosamine-binding residues include arginine 246, lysine 251, and glutamine 313. Residues tyrosine 322, arginine 323, and alanine 325 each coordinate Mg(2+). The UDP-N-acetyl-alpha-D-glucosamine site is built by glutamate 335 and glutamate 343. Threonine 349 is a binding site for Mg(2+).

The protein belongs to the glycosyltransferase group 1 family. MshA subfamily. Homodimer.

It carries out the reaction 1D-myo-inositol 3-phosphate + UDP-N-acetyl-alpha-D-glucosamine = 1D-myo-inositol 2-acetamido-2-deoxy-alpha-D-glucopyranoside 3-phosphate + UDP + H(+). Its function is as follows. Catalyzes the transfer of a N-acetyl-glucosamine moiety to 1D-myo-inositol 3-phosphate to produce 1D-myo-inositol 2-acetamido-2-deoxy-glucopyranoside 3-phosphate in the mycothiol biosynthesis pathway. The chain is D-inositol 3-phosphate glycosyltransferase from Mycolicibacterium vanbaalenii (strain DSM 7251 / JCM 13017 / BCRC 16820 / KCTC 9966 / NRRL B-24157 / PYR-1) (Mycobacterium vanbaalenii).